Here is a 172-residue protein sequence, read N- to C-terminus: Austinoid biosynthesis clusters protein J (172 aa).

Belongs to the trt14 isomerase family. Homodimer.

It functions in the pathway secondary metabolite biosynthesis; terpenoid biosynthesis. Its function is as follows. Part of the gene cluster B that mediates the biosynthesis of the fungal meroterpenoid acetoxydehydroaustin. The first step of the pathway is the synthesis of 3,5-dimethylorsellinic acid by the polyketide synthase ausA. 3,5-dimethylorsellinic acid is then prenylated by the polyprenyl transferase ausN. Further epoxidation by the FAD-dependent monooxygenase ausM and cyclization by the probable terpene cyclase ausL lead to the formation of protoaustinoid A. Protoaustinoid A is then oxidized to spiro-lactone preaustinoid A3 by the combined action of the FAD-binding monooxygenases ausB and ausC, and the dioxygenase ausE. Acid-catalyzed keto-rearrangement and ring contraction of the tetraketide portion of preaustinoid A3 by ausJ lead to the formation of preaustinoid A4. The aldo-keto reductase ausK, with the help of ausH, is involved in the next step by transforming preaustinoid A4 into isoaustinone which is in turn hydroxylated by the P450 monooxygenase ausI to form austinolide. The cytochrome P450 monooxygenase ausG then modifies austinolide to austinol. Austinol is further acetylated to austin by the O-acetyltransferase ausP, which spontaneously changes to dehydroaustin. The cytochrome P450 monooxygenase then converts dehydroaustin is into 7-dehydrodehydroaustin. The hydroxylation catalyzed by ausR permits the second O-acetyltransferase ausQ to add an additional acetyl group to the molecule, leading to the formation of acetoxydehydroaustin. Due to genetic rearrangements of the clusters and the subsequent loss of some enzymes, the end product of the Penicillium brasilianum austinoid biosynthesis clusters is acetoxydehydroaustin. The polypeptide is Austinoid biosynthesis clusters protein J (Penicillium brasilianum).